Consider the following 239-residue polypeptide: Adenylate kinase 2 (239 aa).

ATP is bound at residue 29–34 (GSGKGT). Residues 49-78 (STGDILRAIIASGSELGQKVQKITESGGLV) form an NMP region. AMP contacts are provided by residues threonine 50, arginine 55, 76–78 (GLV), 104–107 (GFPR), and glutamine 111. Positions 145–182 (GRLFHLASGRSYHELFNPPKVPMVDDITGDRLVHRSDD) are LID. ATP contacts are provided by residues arginine 146 and 155 to 156 (SY). Arginine 179 and arginine 190 together coordinate AMP.

This sequence belongs to the adenylate kinase family. AK2 subfamily. Monomer. Mg(2+) serves as cofactor.

It is found in the cytoplasm. Its subcellular location is the cytosol. It catalyses the reaction AMP + ATP = 2 ADP. It participates in purine metabolism; purine nucleotide biosynthesis. Its function is as follows. Catalyzes the reversible transfer of the terminal phosphate group between ATP and AMP. Plays an important role in cellular energy homeostasis and in adenine nucleotide metabolism. The chain is Adenylate kinase 2 from Schistosoma mansoni (Blood fluke).